We begin with the raw amino-acid sequence, 306 residues long: Porphobilinogen deaminase (306 aa).

At C239 the chain carries S-(dipyrrolylmethanemethyl)cysteine.

This sequence belongs to the HMBS family. Monomer. Requires dipyrromethane as cofactor.

It carries out the reaction 4 porphobilinogen + H2O = hydroxymethylbilane + 4 NH4(+). It functions in the pathway porphyrin-containing compound metabolism; protoporphyrin-IX biosynthesis; coproporphyrinogen-III from 5-aminolevulinate: step 2/4. Its function is as follows. Tetrapolymerization of the monopyrrole PBG into the hydroxymethylbilane pre-uroporphyrinogen in several discrete steps. In Helicobacter pylori (strain J99 / ATCC 700824) (Campylobacter pylori J99), this protein is Porphobilinogen deaminase (hemC).